The chain runs to 191 residues: Putative glutathione-dependent formaldehyde-activating enzyme (191 aa).

The CENP-V/GFA domain maps to 20–166 (FSGGTLRCHC…FKSVGLETYD (147 aa)). Residues cysteine 27, cysteine 29, cysteine 48, cysteine 50, cysteine 53, cysteine 95, and cysteine 98 each contribute to the Zn(2+) site.

Belongs to the Gfa family. Zn(2+) serves as cofactor.

It carries out the reaction S-(hydroxymethyl)glutathione = glutathione + formaldehyde. Its pathway is one-carbon metabolism; formaldehyde degradation; formate from formaldehyde (glutathione route): step 1/3. In terms of biological role, catalyzes the condensation of formaldehyde and glutathione to S-hydroxymethylglutathione. The polypeptide is Putative glutathione-dependent formaldehyde-activating enzyme (Colletotrichum graminicola (strain M1.001 / M2 / FGSC 10212) (Maize anthracnose fungus)).